The primary structure comprises 120 residues: Large ribosomal subunit protein bL20 (120 aa).

This sequence belongs to the bacterial ribosomal protein bL20 family.

Binds directly to 23S ribosomal RNA and is necessary for the in vitro assembly process of the 50S ribosomal subunit. It is not involved in the protein synthesizing functions of that subunit. The protein is Large ribosomal subunit protein bL20 of Chlamydia abortus (strain DSM 27085 / S26/3) (Chlamydophila abortus).